Consider the following 237-residue polypeptide: Class B acid phosphatase (237 aa).

The signal sequence occupies residues 1–25 (MRKITLALSAACLLFSLNNAVVARA). The Nucleophile role is filled by D69. 2 residues coordinate Mg(2+): D69 and D71. D71 functions as the Proton donor in the catalytic mechanism. Substrate contacts are provided by residues 137-138 (TG) and K177. Position 192 (D192) interacts with Mg(2+).

It belongs to the class B bacterial acid phosphatase family. As to quaternary structure, homotetramer. Mg(2+) is required as a cofactor.

The protein localises to the periplasm. The catalysed reaction is a phosphate monoester + H2O = an alcohol + phosphate. Functionally, dephosphorylates several organic phosphate monoesters. Also has a phosphotransferase activity catalyzing the transfer of low-energy phosphate groups from organic phosphate monoesters to free hydroxyl groups of various organic compounds. The polypeptide is Class B acid phosphatase (Enterobacter sp. (strain 638)).